The chain runs to 648 residues: Dystrotelin (648 aa).

The ZZ-type zinc-finger motif lies at 223-279; it reads QHRVHCHACKAFPITGLRYRCLKCLNVHLCQSCFLTERRSRKHKPSHSVLEYCTQPS. Positions 228, 231, 243, 246, 252, 255, 265, and 269 each coordinate Zn(2+). The stretch at 367–446 forms a coiled coil; it reads QRETAELQKD…LDTVRHLLSL (80 aa). The segment covering 455–474 has biased composition (polar residues); the sequence is SHSNLQLEQDGSINENNWTQ. 2 disordered regions span residues 455–509 and 536–557; these read SHSN…DTLY and QREE…EGLP. Residues 479 to 502 show a composition bias toward basic and acidic residues; that stretch reads KPHESSSTEHEVEERGTRQERRFE. Acidic residues predominate over residues 538–548; that stretch reads EEEELQEEEEG.

Its subcellular location is the cell membrane. The sequence is that of Dystrotelin (dytn) from Danio rerio (Zebrafish).